The chain runs to 445 residues: Argininosuccinate synthase (445 aa).

ATP is bound by residues 17–25 (AFSGGLDTS) and Ala-43. An L-citrulline-binding site is contributed by Tyr-99. 2 residues coordinate ATP: Gly-129 and Thr-131. 3 residues coordinate L-aspartate: Thr-131, Asn-135, and Asp-136. L-citrulline is bound at residue Asn-135. Asp-136 is an ATP binding site. The L-citrulline site is built by Arg-139 and Ser-192. Asp-194 provides a ligand contact to ATP. Positions 201, 203, and 280 each coordinate L-citrulline.

Belongs to the argininosuccinate synthase family. Type 2 subfamily. As to quaternary structure, homotetramer.

It localises to the cytoplasm. The catalysed reaction is L-citrulline + L-aspartate + ATP = 2-(N(omega)-L-arginino)succinate + AMP + diphosphate + H(+). Its pathway is amino-acid biosynthesis; L-arginine biosynthesis; L-arginine from L-ornithine and carbamoyl phosphate: step 2/3. This is Argininosuccinate synthase from Acidobacterium capsulatum (strain ATCC 51196 / DSM 11244 / BCRC 80197 / JCM 7670 / NBRC 15755 / NCIMB 13165 / 161).